An 83-amino-acid polypeptide reads, in one-letter code: ATP synthase subunit c (83 aa).

Transmembrane regions (helical) follow at residues 10–30 (IAVALLIGMGALGTAIGFGLL) and 52–72 (MFIVAGLLDAVTMIGVGIALY).

Belongs to the ATPase C chain family. F-type ATPases have 2 components, F(1) - the catalytic core - and F(0) - the membrane proton channel. F(1) has five subunits: alpha(3), beta(3), gamma(1), delta(1), epsilon(1). F(0) has three main subunits: a(1), b(2) and c(10-14). The alpha and beta chains form an alternating ring which encloses part of the gamma chain. F(1) is attached to F(0) by a central stalk formed by the gamma and epsilon chains, while a peripheral stalk is formed by the delta and b chains.

The protein localises to the cell inner membrane. Its function is as follows. F(1)F(0) ATP synthase produces ATP from ADP in the presence of a proton or sodium gradient. F-type ATPases consist of two structural domains, F(1) containing the extramembraneous catalytic core and F(0) containing the membrane proton channel, linked together by a central stalk and a peripheral stalk. During catalysis, ATP synthesis in the catalytic domain of F(1) is coupled via a rotary mechanism of the central stalk subunits to proton translocation. In terms of biological role, key component of the F(0) channel; it plays a direct role in translocation across the membrane. A homomeric c-ring of between 10-14 subunits forms the central stalk rotor element with the F(1) delta and epsilon subunits. This chain is ATP synthase subunit c, found in Shewanella denitrificans (strain OS217 / ATCC BAA-1090 / DSM 15013).